We begin with the raw amino-acid sequence, 209 residues long: MAIHTLLFVSLLIFSLIESSSGGKKDRLFTDLQNSIEVTAKPVKDSGVLEAGKDMVTITWKLKSSSAKVDTDTAFKTIQVKLCYAPISQVDRPWRKTDNKLFKDRSCPHEIVSKAYDKTPQSLDWTIGLDIPTGTYFVRAYGIDGDGHEVAYGQSTDEGRTTNLFSVHAISGHHVGLDIASTFFSVFSVVSLFVFFVMEKRKAKLEQRE.

Positions 1–22 (MAIHTLLFVSLLIFSLIESSSG) are cleaved as a signal peptide. The chain crosses the membrane as a helical span at residues 177 to 197 (LDIASTFFSVFSVVSLFVFFV).

This sequence belongs to the NAR2 family. Bearly detected in roots and shoots.

The protein localises to the cell membrane. In terms of biological role, acts as a dual component transporter with NTR2.1. Required for high-affinity nitrate transport. The polypeptide is High-affinity nitrate transporter 3.2 (Arabidopsis thaliana (Mouse-ear cress)).